A 549-amino-acid polypeptide reads, in one-letter code: MLNQKIQNPNPDELMIEVDLCYELDPYELKLDEMIEAEPEPEMIEGLPASDALTPADRYLELFEHVQSAKIFPDSKTFPDCAPKMDPLDILIRYRKVRRHRDFDLRKFVENHFWLPEVYSSEYVSDPQNSLKEHIDQLWPVLTREPQDHIPWSSLLALPQSYIVPGGRFSETYYWDSYFTMLGLAESGREDLLKCMADNFAWMIENYGHIPNGNRTYYLSRSQPPVFALMVELFEEDGVRGARRYLDHLKMEYAFWMDGAESLIPNQAYRHVVRMPDGSLLNRYWDDRDTPRDESWLEDVETAKHSGRPPNEVYRDLRAGAASGWDYSSRWLRDTGRLASIRTTQFIPIDLNAFLFKLESAIANISALKGEKETEALFRQKASARRDAVNRYLWDDENGIYRDYDWRREQLALFSAAAIVPLYVGMANHEQADRLANAVRSRLLTPGGILASEYETGEQWDKPNGWAPLQWMAIQGFKMYGDDLLGDEIARSWLKTVNQFYLEQHKLIEKYHIADGVPREGGGGEYPLQDGFGWTNGVVRRLIGLYGEP.

Residues Arg168, 175–176 (WD), Asn212, 221–223 (RSQ), 292–294 (RDE), and Gly324 each bind substrate. Residues Asp326 and Glu509 each act as proton donor/acceptor in the active site. A substrate-binding site is contributed by Glu525.

The protein belongs to the glycosyl hydrolase 37 family. As to quaternary structure, monomer.

It is found in the cytoplasm. It carries out the reaction alpha,alpha-trehalose + H2O = alpha-D-glucose + beta-D-glucose. Its pathway is glycan degradation; trehalose degradation; D-glucose from alpha,alpha-trehalose: step 1/1. Functionally, hydrolyzes trehalose to glucose. Could be involved, in cells returning to low osmolarity conditions, in the utilization of the accumulated cytoplasmic trehalose, which was synthesized in response to high osmolarity. The polypeptide is Cytoplasmic trehalase (Escherichia coli O157:H7).